The sequence spans 191 residues: Protein GrpE (191 aa).

The protein belongs to the GrpE family. As to quaternary structure, homodimer.

Its subcellular location is the cytoplasm. Participates actively in the response to hyperosmotic and heat shock by preventing the aggregation of stress-denatured proteins, in association with DnaK and GrpE. It is the nucleotide exchange factor for DnaK and may function as a thermosensor. Unfolded proteins bind initially to DnaJ; upon interaction with the DnaJ-bound protein, DnaK hydrolyzes its bound ATP, resulting in the formation of a stable complex. GrpE releases ADP from DnaK; ATP binding to DnaK triggers the release of the substrate protein, thus completing the reaction cycle. Several rounds of ATP-dependent interactions between DnaJ, DnaK and GrpE are required for fully efficient folding. The protein is Protein GrpE of Listeria monocytogenes serotype 1/2a (strain 10403S).